The chain runs to 1038 residues: GTPase-activating Rap/Ran-GAP domain-like protein 3 (1038 aa).

Residues K6 and S68 each carry the phosphoserine modification. The Rap-GAP domain maps to 214–430 (LLVLEEQEGS…RTLDMLIRSL (217 aa)). S449 and S455 each carry phosphoserine. In terms of domain architecture, CNH spans 512–824 (PHEAVCADPW…QLVASRSDIY (313 aa)). Disordered regions lie at residues 833–863 (EGSS…FPSS) and 937–1038 (LLGL…IDLK). At T851 the chain carries Phosphothreonine. Positions 1019–1028 (SGSSPFQLMA) are enriched in polar residues.

The protein belongs to the GARNL3 family.

This Mus musculus (Mouse) protein is GTPase-activating Rap/Ran-GAP domain-like protein 3 (Garnl3).